We begin with the raw amino-acid sequence, 205 residues long: Cytochrome c biogenesis ATP-binding export protein CcmA 2 (205 aa).

An ABC transporter domain is found at 2–205 (LEARDLHCER…LALTGGEAGL (204 aa)). 34 to 41 (GGNGAGKT) contributes to the ATP binding site.

Belongs to the ABC transporter superfamily. CcmA exporter (TC 3.A.1.107) family. The complex is composed of two ATP-binding proteins (CcmA) and two transmembrane proteins (CcmB).

The protein localises to the cell inner membrane. It carries out the reaction heme b(in) + ATP + H2O = heme b(out) + ADP + phosphate + H(+). Its function is as follows. Part of the ABC transporter complex CcmAB involved in the biogenesis of c-type cytochromes; once thought to export heme, this seems not to be the case, but its exact role is uncertain. Responsible for energy coupling to the transport system. The polypeptide is Cytochrome c biogenesis ATP-binding export protein CcmA 2 (Salmonella paratyphi A (strain ATCC 9150 / SARB42)).